The primary structure comprises 179 residues: ATP synthase subunit delta (179 aa).

Belongs to the ATPase delta chain family. In terms of assembly, F-type ATPases have 2 components, F(1) - the catalytic core - and F(0) - the membrane proton channel. F(1) has five subunits: alpha(3), beta(3), gamma(1), delta(1), epsilon(1). F(0) has three main subunits: a(1), b(2) and c(10-14). The alpha and beta chains form an alternating ring which encloses part of the gamma chain. F(1) is attached to F(0) by a central stalk formed by the gamma and epsilon chains, while a peripheral stalk is formed by the delta and b chains.

The protein localises to the cell membrane. Its function is as follows. F(1)F(0) ATP synthase produces ATP from ADP in the presence of a proton or sodium gradient. F-type ATPases consist of two structural domains, F(1) containing the extramembraneous catalytic core and F(0) containing the membrane proton channel, linked together by a central stalk and a peripheral stalk. During catalysis, ATP synthesis in the catalytic domain of F(1) is coupled via a rotary mechanism of the central stalk subunits to proton translocation. In terms of biological role, this protein is part of the stalk that links CF(0) to CF(1). It either transmits conformational changes from CF(0) to CF(1) or is implicated in proton conduction. This Staphylococcus haemolyticus (strain JCSC1435) protein is ATP synthase subunit delta.